Consider the following 479-residue polypeptide: Transcript termination protein A18 (479 aa).

Residues K99–L255 form the Helicase ATP-binding domain. L112–T119 provides a ligand contact to ATP. The short motif at D205–H208 is the DESH box element. Residues I308–A469 enclose the Helicase C-terminal domain.

This sequence belongs to the helicase family. Poxviruses subfamily. As to quaternary structure, interacts with G2. Might be part of a transcription complex composed at least of G2, A18, and H5.

The protein localises to the virion. Functionally, DNA helicase which seems to act as a postreplicative transcription termination factor. Involved in ATP-dependent release of nascent RNA. Forms a stable complex with single-stranded DNA, and to a lesser extent RNA. The chain is Transcript termination protein A18 from Homo sapiens (Human).